The following is a 49-amino-acid chain: Astexin-3 (49 aa).

The propeptide occupies 1 to 25; that stretch reads MRTYNRSLPARAGLTDLGKVTTHTK. The isoaspartyl glycine isopeptide (Gly-Asp) cross-link spans 26 to 34; the sequence is GPTPMVGLD.

Post-translationally, this lasso peptide is hydrolyzed to a linear form by the isopeptidase AtxE2, in vitro. The isopeptidase AtxE2 only recognizes the threaded form (but not the unthreaded form).

The protein resides in the cytoplasm. Its subcellular location is the secreted. Functionally, shows weak antimicrobial activity against its phylogenetic relative Caulobacter crescentus. Does not show activity against other bacteria tested (E.coli, Vibrio sp, Burkhoderia thailandensis, and Salmonella newport). This chain is Astexin-3, found in Asticcacaulis excentricus (strain ATCC 15261 / DSM 4724 / KCTC 12464 / NCIMB 9791 / VKM B-1370 / CB 48).